The chain runs to 478 residues: Keratin, type II cytoskeletal 8 (478 aa).

Residues 1-97 form a head region; sequence MSIRVTQKSY…DPNIQAVRTQ (97 aa). Phosphoserine; by PKC/PRKCE is present on Ser9. Lys11 is covalently cross-linked (Glycyl lysine isopeptide (Lys-Gly) (interchain with G-Cter in SUMO2)). 4 positions are modified to phosphoserine: Ser13, Ser15, Ser21, and Ser22. A disordered region spans residues 16-44; the sequence is APRSFSSRSYTSGPGSRISSSAFSRVGSS. An Omega-N-methylarginine modification is found at Arg23. Ser24 carries the phosphoserine; by PKC/PRKCE modification. A Phosphothreonine modification is found at Thr26. Ser27 and Ser31 each carry phosphoserine. Arg32 bears the Omega-N-methylarginine mark. Phosphoserine occurs at positions 34 and 39. Omega-N-methylarginine is present on Arg40. Ser43 and Ser44 each carry phosphoserine. Arg48 carries the post-translational modification Asymmetric dimethylarginine; alternate. Arg48 carries the post-translational modification Omega-N-methylarginine; alternate. Residue Ser81 is modified to Phosphoserine; by MAPK. Positions 98 to 133 are coil 1A; sequence EKEQIKTLNNKFASFIDKVRHLEQQNKVLETKWNLL. An IF rod domain is found at 98–409; it reads EKEQIKTLNN…KLLEGEESRL (312 aa). N6-malonyllysine is present on Lys108. Residues Lys129 and Lys137 each participate in a glycyl lysine isopeptide (Lys-Gly) (interchain with G-Cter in SUMO2) cross-link. Residues 134 to 150 are linker 1; it reads QQQKTARSNIDNMFESY. Residues 151–242 form a coil 1B region; the sequence is INNLRRQLET…QLYEEEIREM (92 aa). Lys204 participates in a covalent cross-link: Glycyl lysine isopeptide (Lys-Gly) (interchain with G-Cter in SUMO1); alternate. A Glycyl lysine isopeptide (Lys-Gly) (interchain with G-Cter in SUMO2); alternate cross-link involves residue Lys204. Lys214 is subject to N6-acetyllysine. Tyr235 bears the Phosphotyrosine mark. Residues 243 to 266 form a linker 12 region; the sequence is QSQISDTSVVLEMDNNRNLDLDGI. The coil 2 stretch occupies residues 267–405; it reads IAEVKAQYEE…ATYRKLLEGE (139 aa). The interval 268-389 is necessary for interaction with PNN; that stretch reads AEVKAQYEEI…EYQELMNVKL (122 aa). Lys271 is covalently cross-linked (Glycyl lysine isopeptide (Lys-Gly) (interchain with G-Cter in SUMO2)). Phosphoserine is present on Ser281. Residue Lys292 forms a Glycyl lysine isopeptide (Lys-Gly) (interchain with G-Cter in SUMO2) linkage. A Glycyl lysine isopeptide (Lys-Gly) (interchain with G-Cter in SUMO2); alternate cross-link involves residue Lys302. At Lys302 the chain carries N6-acetyllysine; alternate. A Glycyl lysine isopeptide (Lys-Gly) (interchain with G-Cter in SUMO2) cross-link involves residue Lys311. Lys332 is covalently cross-linked (Glycyl lysine isopeptide (Lys-Gly) (interchain with G-Cter in SUMO2); alternate). Lys332 carries the N6-acetyllysine; alternate modification. Ser337 is subject to Phosphoserine. Lys400 participates in a covalent cross-link: Glycyl lysine isopeptide (Lys-Gly) (interchain with G-Cter in SUMO2). Residues 406–478 form a tail region; the sequence is ESRLESGMQN…VSESSDVLSK (73 aa). Ser407, Ser411, Ser417, Ser424, and Ser433 each carry phosphoserine. Residue Lys467 forms a Glycyl lysine isopeptide (Lys-Gly) (interchain with G-Cter in SUMO1); alternate linkage. Lys467 participates in a covalent cross-link: Glycyl lysine isopeptide (Lys-Gly) (interchain with G-Cter in SUMO2); alternate. A phosphoserine mark is found at Ser470, Ser472, Ser473, and Ser477.

The protein belongs to the intermediate filament family. As to quaternary structure, heterotetramer of two type I and two type II keratins. Forms a heterodimer with KRT18. Associates with KRT20. Interacts with PNN. When associated with KRT19, interacts with DMD. Interacts with TCHP. Interacts with APEX1. Interacts with GPER1. Interacts with EPPK1. Interacts with PKP1 and PKP2. In terms of processing, O-glycosylated. O-GlcNAcylation at multiple sites increases solubility, and decreases stability by inducing proteasomal degradation. Post-translationally, O-glycosylated (O-GlcNAcylated), in a cell cycle-dependent manner. As to expression, expressed in bladder, liver, exocervix and (in very low amounts) esophagus.

It localises to the cytoplasm. Its subcellular location is the nucleus. It is found in the nucleoplasm. The protein localises to the nucleus matrix. Together with KRT19, helps to link the contractile apparatus to dystrophin at the costameres of striated muscle. In Bos taurus (Bovine), this protein is Keratin, type II cytoskeletal 8 (KRT8).